Here is a 1012-residue protein sequence, read N- to C-terminus: RAS protein activator like-3 (1012 aa).

3 disordered regions span residues 1–128 (MDPP…TPDV), 147–196 (GNED…QIHN), and 208–229 (KKAKSELGASASRDGPPSALGS). A compositionally biased stretch (polar residues) spans 7 to 21 (SRASQTQPVAPSPLT). Position 18 is a phosphoserine (S18). A compositionally biased stretch (gly residues) spans 27–39 (SGGGAEKGAGGFR). A compositionally biased stretch (polar residues) spans 50–62 (QSHQETTASSQPA). S51 bears the Phosphoserine mark. Residues 100-113 (SEPEPENPEPEPEL) are compositionally biased toward acidic residues. Phosphoserine is present on residues S160, S162, S163, and S166. A compositionally biased stretch (low complexity) spans 160 to 171 (SASSESSIHVAS). A compositionally biased stretch (basic and acidic residues) spans 175–186 (KDPDRTPGKTDP). The PH domain maps to 193–294 (QIHNVRGLLK…WIEDLRRHFQ (102 aa)). S212, S225, S229, and S232 each carry phosphoserine. T235 carries the phosphothreonine modification. A C2 domain is found at 285–405 (WIEDLRRHFQ…APAAGLERWF (121 aa)). One can recognise a Ras-GAP domain in the interval 475 to 683 (GRAQALVTDL…PAMQHFLDQV (209 aa)). Residues 752 to 887 (PAPRTQGHSS…DKDQALGTHR (136 aa)) form a disordered region. S788 and S791 each carry phosphoserine. The segment covering 826-841 (PARRRPSAGPRPRPKG) has biased composition (basic residues). Residues 889–989 (VGKLAELQCE…KDTIQNLQLL (101 aa)) adopt a coiled-coil conformation. Polar residues predominate over residues 990–999 (PRTSESQSQP). The disordered stretch occupies residues 990–1012 (PRTSESQSQPVPLKAPCINGDTT).

It localises to the cytoplasm. The protein resides in the cell cortex. Functions as a Ras GTPase-activating protein. Plays an important role in the expansion and functions of natural killer T (NKT) cells in the liver by negatively regulating RAS activity and the down-stream ERK signaling pathway. The sequence is that of RAS protein activator like-3 (RASAL3) from Bos taurus (Bovine).